The sequence spans 269 residues: 4-hydroxy-tetrahydrodipicolinate reductase (269 aa).

NAD(+) contacts are provided by residues 8–13 (GAGGRM) and Glu-34. Arg-35 contacts NADP(+). NAD(+) is bound by residues 98 to 100 (GTT) and 122 to 125 (ASNY). His-155 serves as the catalytic Proton donor/acceptor. A (S)-2,3,4,5-tetrahydrodipicolinate-binding site is contributed by His-156. Catalysis depends on Lys-159, which acts as the Proton donor. Residue 165–166 (GT) coordinates (S)-2,3,4,5-tetrahydrodipicolinate.

The protein belongs to the DapB family.

The protein localises to the cytoplasm. It carries out the reaction (S)-2,3,4,5-tetrahydrodipicolinate + NAD(+) + H2O = (2S,4S)-4-hydroxy-2,3,4,5-tetrahydrodipicolinate + NADH + H(+). The catalysed reaction is (S)-2,3,4,5-tetrahydrodipicolinate + NADP(+) + H2O = (2S,4S)-4-hydroxy-2,3,4,5-tetrahydrodipicolinate + NADPH + H(+). It participates in amino-acid biosynthesis; L-lysine biosynthesis via DAP pathway; (S)-tetrahydrodipicolinate from L-aspartate: step 4/4. In terms of biological role, catalyzes the conversion of 4-hydroxy-tetrahydrodipicolinate (HTPA) to tetrahydrodipicolinate. This chain is 4-hydroxy-tetrahydrodipicolinate reductase, found in Haemophilus ducreyi (strain 35000HP / ATCC 700724).